The chain runs to 359 residues: Putative gluconeogenesis factor (359 aa).

The interval 317 to 359 (VGNQDSSAPTVAATEQIRLDGKRPQTGVNGPVGKGPRGDDAWR) is disordered.

The protein belongs to the gluconeogenesis factor family.

The protein localises to the cytoplasm. Required for morphogenesis under gluconeogenic growth conditions. The chain is Putative gluconeogenesis factor from Mycobacterium leprae (strain TN).